The sequence spans 539 residues: Probable malate:quinone oxidoreductase (539 aa).

This sequence belongs to the MQO family. FAD serves as cofactor.

The enzyme catalyses (S)-malate + a quinone = a quinol + oxaloacetate. Its pathway is carbohydrate metabolism; tricarboxylic acid cycle; oxaloacetate from (S)-malate (quinone route): step 1/1. This is Probable malate:quinone oxidoreductase from Sodalis glossinidius (strain morsitans).